We begin with the raw amino-acid sequence, 109 residues long: ATPase inhibitor, mitochondrial (109 aa).

Residues 1 to 25 (MAATALAARTRQAVWSVWAMQGRGF) constitute a mitochondrion transit peptide. The tract at residues 26 to 52 (GSESGDNVRSSAGAVRDAGGAFGKREQ) is disordered. Residues 26 to 52 (GSESGDNVRSSAGAVRDAGGAFGKREQ) are N-terminal inhibitory region. Positions 69-109 (ALKKHHENEISHHAKEIERLQKEIERHKQSIKKLKQSEDDD) form a coiled coil. Positions 74–106 (HENEISHHAKEIERLQKEIERHKQSIKKLKQSE) are antiparallel alpha-helical coiled coil region. Lys103 bears the N6-succinyllysine mark.

This sequence belongs to the ATPase inhibitor family. In terms of assembly, homodimer; represents the active form and is present at a pH value below 6.5. Homotetramer; represents the inactive form and is present at a pH value above 7.0.

The protein resides in the mitochondrion. Endogenous F(1)F(o)-ATPase inhibitor limiting ATP depletion when the mitochondrial membrane potential falls below a threshold and the F(1)F(o)-ATP synthase starts hydrolyzing ATP to pump protons out of the mitochondrial matrix. Required to avoid the consumption of cellular ATP when the F(1)F(o)-ATP synthase enzyme acts as an ATP hydrolase. Indirectly acts as a regulator of heme synthesis in erythroid tissues: regulates heme synthesis by modulating the mitochondrial pH and redox potential, allowing FECH to efficiently catalyze the incorporation of iron into protoporphyrin IX to produce heme. In Bos taurus (Bovine), this protein is ATPase inhibitor, mitochondrial.